The primary structure comprises 275 residues: uncharacterized protein (275 aa).

This is an uncharacterized protein from Methanocaldococcus jannaschii (strain ATCC 43067 / DSM 2661 / JAL-1 / JCM 10045 / NBRC 100440) (Methanococcus jannaschii).